Reading from the N-terminus, the 461-residue chain is Acetylornithine aminotransferase, mitochondrial (461 aa).

The interval 36 to 56 is disordered; the sequence is YATASQLTHPDPTEDSPSGKM. An N6-(pyridoxal phosphate)lysine modification is found at Lys-312.

Belongs to the class-III pyridoxal-phosphate-dependent aminotransferase family. The cofactor is pyridoxal 5'-phosphate.

It localises to the mitochondrion matrix. It carries out the reaction N(2)-acetyl-L-ornithine + 2-oxoglutarate = N-acetyl-L-glutamate 5-semialdehyde + L-glutamate. The protein operates within amino-acid biosynthesis; L-arginine biosynthesis; N(2)-acetyl-L-ornithine from L-glutamate: step 4/4. The chain is Acetylornithine aminotransferase, mitochondrial (arg-8) from Neurospora crassa (strain ATCC 24698 / 74-OR23-1A / CBS 708.71 / DSM 1257 / FGSC 987).